Consider the following 407-residue polypeptide: Argininosuccinate synthase (407 aa).

Residues 13-21 and alanine 40 each bind ATP; that span reads AYSGGLDTS. Tyrosine 91 and serine 96 together coordinate L-citrulline. Glycine 121 provides a ligand contact to ATP. L-aspartate-binding residues include threonine 123, asparagine 127, and aspartate 128. Asparagine 127 is an L-citrulline binding site. Residues arginine 131, serine 182, serine 191, glutamate 267, and tyrosine 279 each coordinate L-citrulline.

This sequence belongs to the argininosuccinate synthase family. Type 1 subfamily. As to quaternary structure, homotetramer.

It is found in the cytoplasm. The enzyme catalyses L-citrulline + L-aspartate + ATP = 2-(N(omega)-L-arginino)succinate + AMP + diphosphate + H(+). It participates in amino-acid biosynthesis; L-arginine biosynthesis; L-arginine from L-ornithine and carbamoyl phosphate: step 2/3. The sequence is that of Argininosuccinate synthase from Rhizobium etli (strain ATCC 51251 / DSM 11541 / JCM 21823 / NBRC 15573 / CFN 42).